Here is a 128-residue protein sequence, read N- to C-terminus: SH2 domain-containing protein 1A (128 aa).

In terms of domain architecture, SH2 spans 6–102 (VYHGKISRET…GIVIPLQYPV (97 aa)). The interval 67–92 (ETAPGVHKRFFRKIKNLISAFQKPDQ) is interaction with FYN SH3 domain. Residue lysine 89 is modified to N6-acetyllysine. The segment at 104-128 (KKPSARSTQGATGRRDDPDVFLKTP) is disordered. Over residues 116-128 (GRRDDPDVFLKTP) the composition is skewed to basic and acidic residues.

As to quaternary structure, interacts with CD84, CD244, LY9, SLAMF1 and FYN. Interacts with NTRK1, NTRK2 and NTRK3.

The protein resides in the cytoplasm. Cytoplasmic adapter regulating receptors of the signaling lymphocytic activation molecule (SLAM) family such as SLAMF1, CD244, LY9, CD84, SLAMF6 and SLAMF7. In SLAM signaling seems to cooperate with SH2D1B/EAT-2. Initially it has been proposed that association with SLAMF1 prevents SLAMF1 binding to inhibitory effectors including INPP5D/SHIP1 and PTPN11/SHP-2. However, by simultaneous interactions, recruits FYN which subsequently phosphorylates and activates SLAMF1. Positively regulates CD244/2B4- and CD84-mediated natural killer (NK) cell functions. Can also promote CD48-, SLAMF6 -, LY9-, and SLAMF7-mediated NK cell activation. In the context of NK cell-mediated cytotoxicity enhances conjugate formation with target cells. May also regulate the activity of the neurotrophin receptors NTRK1, NTRK2 and NTRK3. This chain is SH2 domain-containing protein 1A (SH2D1A), found in Bos taurus (Bovine).